The sequence spans 616 residues: Chaperone protein HscA (616 aa).

The protein belongs to the heat shock protein 70 family.

Its function is as follows. Chaperone involved in the maturation of iron-sulfur cluster-containing proteins. Has a low intrinsic ATPase activity which is markedly stimulated by HscB. Involved in the maturation of IscU. This Photorhabdus laumondii subsp. laumondii (strain DSM 15139 / CIP 105565 / TT01) (Photorhabdus luminescens subsp. laumondii) protein is Chaperone protein HscA.